The following is a 66-amino-acid chain: DNA gyrase inhibitor YacG (66 aa).

4 residues coordinate Zn(2+): C9, C12, C28, and C32. The disordered stretch occupies residues 45-66; sequence HKIAGSEESEDELYSGDLEPRH.

The protein belongs to the DNA gyrase inhibitor YacG family. Interacts with GyrB. Zn(2+) serves as cofactor.

Inhibits all the catalytic activities of DNA gyrase by preventing its interaction with DNA. Acts by binding directly to the C-terminal domain of GyrB, which probably disrupts DNA binding by the gyrase. This Pseudomonas putida (strain ATCC 47054 / DSM 6125 / CFBP 8728 / NCIMB 11950 / KT2440) protein is DNA gyrase inhibitor YacG.